Here is a 140-residue protein sequence, read N- to C-terminus: 3-hydroxyacyl-[acyl-carrier-protein] dehydratase FabZ (140 aa).

His48 is an active-site residue.

The protein belongs to the thioester dehydratase family. FabZ subfamily.

The protein resides in the cytoplasm. The catalysed reaction is a (3R)-hydroxyacyl-[ACP] = a (2E)-enoyl-[ACP] + H2O. Its function is as follows. Involved in unsaturated fatty acids biosynthesis. Catalyzes the dehydration of short chain beta-hydroxyacyl-ACPs and long chain saturated and unsaturated beta-hydroxyacyl-ACPs. The sequence is that of 3-hydroxyacyl-[acyl-carrier-protein] dehydratase FabZ from Latilactobacillus sakei subsp. sakei (strain 23K) (Lactobacillus sakei subsp. sakei).